We begin with the raw amino-acid sequence, 367 residues long: 2-aminoethylphosphonate--pyruvate transaminase (367 aa).

At K194 the chain carries N6-(pyridoxal phosphate)lysine.

Belongs to the class-V pyridoxal-phosphate-dependent aminotransferase family. PhnW subfamily. Homodimer. Requires pyridoxal 5'-phosphate as cofactor.

The enzyme catalyses (2-aminoethyl)phosphonate + pyruvate = phosphonoacetaldehyde + L-alanine. Functionally, involved in phosphonate degradation. The sequence is that of 2-aminoethylphosphonate--pyruvate transaminase from Salmonella paratyphi B (strain ATCC BAA-1250 / SPB7).